We begin with the raw amino-acid sequence, 39 residues long: Photosystem II reaction center protein L (39 aa).

Residues 18–38 (SLYLGLLLIAVLGILFSSYFF) traverse the membrane as a helical segment.

This sequence belongs to the PsbL family. PSII is composed of 1 copy each of membrane proteins PsbA, PsbB, PsbC, PsbD, PsbE, PsbF, PsbH, PsbI, PsbJ, PsbK, PsbL, PsbM, PsbT, PsbX, PsbY, PsbZ, Psb30/Ycf12, peripheral proteins PsbO, CyanoQ (PsbQ), PsbU, PsbV and a large number of cofactors. It forms dimeric complexes.

It is found in the cellular thylakoid membrane. One of the components of the core complex of photosystem II (PSII). PSII is a light-driven water:plastoquinone oxidoreductase that uses light energy to abstract electrons from H(2)O, generating O(2) and a proton gradient subsequently used for ATP formation. It consists of a core antenna complex that captures photons, and an electron transfer chain that converts photonic excitation into a charge separation. This subunit is found at the monomer-monomer interface and is required for correct PSII assembly and/or dimerization. The polypeptide is Photosystem II reaction center protein L (Picosynechococcus sp. (strain ATCC 27264 / PCC 7002 / PR-6) (Agmenellum quadruplicatum)).